The chain runs to 1212 residues: DNA-directed RNA polymerase subunit beta' (1212 aa).

Residues Cys60, Cys62, Cys75, and Cys78 each contribute to the Zn(2+) site. Asp450, Asp452, and Asp454 together coordinate Mg(2+). Positions 819, 893, 900, and 903 each coordinate Zn(2+).

It belongs to the RNA polymerase beta' chain family. The RNAP catalytic core consists of 2 alpha, 1 beta, 1 beta' and 1 omega subunit. When a sigma factor is associated with the core the holoenzyme is formed, which can initiate transcription. Mg(2+) serves as cofactor. It depends on Zn(2+) as a cofactor.

The enzyme catalyses RNA(n) + a ribonucleoside 5'-triphosphate = RNA(n+1) + diphosphate. Functionally, DNA-dependent RNA polymerase catalyzes the transcription of DNA into RNA using the four ribonucleoside triphosphates as substrates. This chain is DNA-directed RNA polymerase subunit beta', found in Streptococcus thermophilus (strain CNRZ 1066).